A 204-amino-acid polypeptide reads, in one-letter code: Holliday junction branch migration complex subunit RuvA (204 aa).

A domain I region spans residues 1–64; it reads MIGKLKGTID…EDQLKLFGFM (64 aa). The tract at residues 65-143 is domain II; the sequence is TALEREWFNL…AFAGEAINIG (79 aa). A flexible linker region spans residues 144–151; the sequence is LKQELGEG. The segment at 152–204 is domain III; that stretch reads VAAAPVADAVSALTNLGYSRDQAANAIAAAMKTAGEGADSAKLIRLGLKELAR.

This sequence belongs to the RuvA family. As to quaternary structure, homotetramer. Forms an RuvA(8)-RuvB(12)-Holliday junction (HJ) complex. HJ DNA is sandwiched between 2 RuvA tetramers; dsDNA enters through RuvA and exits via RuvB. An RuvB hexamer assembles on each DNA strand where it exits the tetramer. Each RuvB hexamer is contacted by two RuvA subunits (via domain III) on 2 adjacent RuvB subunits; this complex drives branch migration. In the full resolvosome a probable DNA-RuvA(4)-RuvB(12)-RuvC(2) complex forms which resolves the HJ.

The protein resides in the cytoplasm. Its function is as follows. The RuvA-RuvB-RuvC complex processes Holliday junction (HJ) DNA during genetic recombination and DNA repair, while the RuvA-RuvB complex plays an important role in the rescue of blocked DNA replication forks via replication fork reversal (RFR). RuvA specifically binds to HJ cruciform DNA, conferring on it an open structure. The RuvB hexamer acts as an ATP-dependent pump, pulling dsDNA into and through the RuvAB complex. HJ branch migration allows RuvC to scan DNA until it finds its consensus sequence, where it cleaves and resolves the cruciform DNA. This Rhizobium johnstonii (strain DSM 114642 / LMG 32736 / 3841) (Rhizobium leguminosarum bv. viciae) protein is Holliday junction branch migration complex subunit RuvA.